A 460-amino-acid polypeptide reads, in one-letter code: L-seryl-tRNA(Sec) selenium transferase (460 aa).

The residue at position 293 (Lys293) is an N6-(pyridoxal phosphate)lysine.

It belongs to the SelA family. It depends on pyridoxal 5'-phosphate as a cofactor.

It is found in the cytoplasm. It carries out the reaction L-seryl-tRNA(Sec) + selenophosphate + H(+) = L-selenocysteinyl-tRNA(Sec) + phosphate. It participates in aminoacyl-tRNA biosynthesis; selenocysteinyl-tRNA(Sec) biosynthesis; selenocysteinyl-tRNA(Sec) from L-seryl-tRNA(Sec) (bacterial route): step 1/1. Functionally, converts seryl-tRNA(Sec) to selenocysteinyl-tRNA(Sec) required for selenoprotein biosynthesis. The protein is L-seryl-tRNA(Sec) selenium transferase of Pasteurella multocida (strain Pm70).